The sequence spans 135 residues: Sex-regulated protein janus-A (135 aa).

Position 37 (Lys-37) interacts with substrate. His-63 serves as the catalytic Proton acceptor. 104–106 (SQG) serves as a coordination point for substrate.

This sequence belongs to the janus family. As to expression, somatic and germline cells. Isoform B is expressed in both sexes and in somatic and germ line cells. Isoform A is expressed in males and is germ line specific.

JanA and janB regulate somatic sex differentiation. This chain is Sex-regulated protein janus-A (janA), found in Drosophila melanogaster (Fruit fly).